The chain runs to 255 residues: Hydroxyacylglutathione hydrolase (255 aa).

His56, His58, Asp60, His61, His114, Asp133, and His171 together coordinate Zn(2+).

The protein belongs to the metallo-beta-lactamase superfamily. Glyoxalase II family. Monomer. Zn(2+) serves as cofactor.

It carries out the reaction an S-(2-hydroxyacyl)glutathione + H2O = a 2-hydroxy carboxylate + glutathione + H(+). It participates in secondary metabolite metabolism; methylglyoxal degradation; (R)-lactate from methylglyoxal: step 2/2. Functionally, thiolesterase that catalyzes the hydrolysis of S-D-lactoyl-glutathione to form glutathione and D-lactic acid. The protein is Hydroxyacylglutathione hydrolase of Bradyrhizobium sp. (strain ORS 278).